The following is a 114-amino-acid chain: uncharacterized protein (114 aa).

The protein resides in the mitochondrion. This is an uncharacterized protein from Arabidopsis thaliana (Mouse-ear cress).